The chain runs to 631 residues: 1-deoxy-D-xylulose-5-phosphate synthase (631 aa).

Residues H72 and 113–115 (GHA) contribute to the thiamine diphosphate site. D144 is a binding site for Mg(2+). Thiamine diphosphate is bound by residues 145-146 (GA), N174, Y287, and E370. N174 provides a ligand contact to Mg(2+).

Belongs to the transketolase family. DXPS subfamily. Homodimer. Mg(2+) is required as a cofactor. It depends on thiamine diphosphate as a cofactor.

The enzyme catalyses D-glyceraldehyde 3-phosphate + pyruvate + H(+) = 1-deoxy-D-xylulose 5-phosphate + CO2. It functions in the pathway metabolic intermediate biosynthesis; 1-deoxy-D-xylulose 5-phosphate biosynthesis; 1-deoxy-D-xylulose 5-phosphate from D-glyceraldehyde 3-phosphate and pyruvate: step 1/1. Catalyzes the acyloin condensation reaction between C atoms 2 and 3 of pyruvate and glyceraldehyde 3-phosphate to yield 1-deoxy-D-xylulose-5-phosphate (DXP). The polypeptide is 1-deoxy-D-xylulose-5-phosphate synthase (Prochlorococcus marinus (strain MIT 9515)).